We begin with the raw amino-acid sequence, 268 residues long: Phosphate import ATP-binding protein PstB 2 (268 aa).

The region spanning Tyr19–Ile263 is the ABC transporter domain. Residue Gly51 to Ser58 participates in ATP binding.

It belongs to the ABC transporter superfamily. Phosphate importer (TC 3.A.1.7) family. In terms of assembly, the complex is composed of two ATP-binding proteins (PstB), two transmembrane proteins (PstC and PstA) and a solute-binding protein (PstS).

It is found in the cell inner membrane. It catalyses the reaction phosphate(out) + ATP + H2O = ADP + 2 phosphate(in) + H(+). Its function is as follows. Part of the ABC transporter complex PstSACB involved in phosphate import. Responsible for energy coupling to the transport system. The protein is Phosphate import ATP-binding protein PstB 2 of Gloeobacter violaceus (strain ATCC 29082 / PCC 7421).